The primary structure comprises 832 residues: Polyphosphoinositide phosphatase (832 aa).

The SAC domain occupies 145–491 (IEKVDLARTF…GDAIALQYGG (347 aa)).

As to quaternary structure, component of the PI(3,5)P2 regulatory complex. Mg(2+) is required as a cofactor.

It is found in the cytoplasm. The protein resides in the vacuole membrane. The enzyme catalyses a 1,2-diacyl-sn-glycero-3-phospho-(1D-myo-inositol-3,5-bisphosphate) + H2O = a 1,2-diacyl-sn-glycero-3-phospho-(1D-myo-inositol-3-phosphate) + phosphate. In terms of biological role, the PI(3,5)P2 regulatory complex regulates both the synthesis and turnover of phosphatidylinositol 3,5-bisphosphate (PtdIns(3,5)P2). The protein is Polyphosphoinositide phosphatase of Schizosaccharomyces pombe (strain 972 / ATCC 24843) (Fission yeast).